The primary structure comprises 111 residues: UPF0122 protein LACR_1522 (111 aa).

The protein belongs to the UPF0122 family.

Its function is as follows. Might take part in the signal recognition particle (SRP) pathway. This is inferred from the conservation of its genetic proximity to ftsY/ffh. May be a regulatory protein. This is UPF0122 protein LACR_1522 from Lactococcus lactis subsp. cremoris (strain SK11).